A 363-amino-acid polypeptide reads, in one-letter code: UDP-3-O-acylglucosamine N-acyltransferase (363 aa).

Residue H252 is the Proton acceptor of the active site.

The protein belongs to the transferase hexapeptide repeat family. LpxD subfamily. In terms of assembly, homotrimer.

It carries out the reaction a UDP-3-O-[(3R)-3-hydroxyacyl]-alpha-D-glucosamine + a (3R)-hydroxyacyl-[ACP] = a UDP-2-N,3-O-bis[(3R)-3-hydroxyacyl]-alpha-D-glucosamine + holo-[ACP] + H(+). It participates in bacterial outer membrane biogenesis; LPS lipid A biosynthesis. Catalyzes the N-acylation of UDP-3-O-acylglucosamine using 3-hydroxyacyl-ACP as the acyl donor. Is involved in the biosynthesis of lipid A, a phosphorylated glycolipid that anchors the lipopolysaccharide to the outer membrane of the cell. This chain is UDP-3-O-acylglucosamine N-acyltransferase, found in Cupriavidus taiwanensis (strain DSM 17343 / BCRC 17206 / CCUG 44338 / CIP 107171 / LMG 19424 / R1) (Ralstonia taiwanensis (strain LMG 19424)).